Here is a 136-residue protein sequence, read N- to C-terminus: Large ribosomal subunit protein uL16 (136 aa).

The segment covering 1–17 has biased composition (basic residues); that stretch reads MLQPKRTKFRKRHKGRN. The disordered stretch occupies residues 1–21; sequence MLQPKRTKFRKRHKGRNRGLA.

It belongs to the universal ribosomal protein uL16 family. As to quaternary structure, part of the 50S ribosomal subunit.

Its function is as follows. Binds 23S rRNA and is also seen to make contacts with the A and possibly P site tRNAs. This chain is Large ribosomal subunit protein uL16, found in Buchnera aphidicola subsp. Acyrthosiphon kondoi (Acyrthosiphon kondoi symbiotic bacterium).